A 474-amino-acid polypeptide reads, in one-letter code: Trigger factor (474 aa).

Residues 165–250 enclose the PPIase FKBP-type domain; it reads GDRVTIDYLG…VKTVSKPDEL (86 aa). The span at 451–467 shows a compositional bias: basic and acidic residues; that stretch reads VKKKTASDNKKSNEIKK. The disordered stretch occupies residues 451–474; it reads VKKKTASDNKKSNEIKKKSTMKKV.

This sequence belongs to the FKBP-type PPIase family. Tig subfamily.

The protein localises to the cytoplasm. It carries out the reaction [protein]-peptidylproline (omega=180) = [protein]-peptidylproline (omega=0). Its function is as follows. Involved in protein export. Acts as a chaperone by maintaining the newly synthesized protein in an open conformation. Functions as a peptidyl-prolyl cis-trans isomerase. The chain is Trigger factor from Bartonella bacilliformis (strain ATCC 35685 / KC583 / Herrer 020/F12,63).